The chain runs to 201 residues: MELVLKDAQSALEVSETTFGRDFNEALVHQVVVAYAANARQGTRAQKTRAEVTGSGKKPWRQKGTGRARAGSVKGPIWRGGGVTFAAKTQDHSQKVNKKMYRGALKSIFSELVRQERLVVVESFGVEAPKTKELKAKLKAMNLEDVLIVTAEVDENLFLAARNLYKVDVRDVAGLDPVSLIAFNTVLVTADAVKQIEEMLA.

The segment at 45 to 72 is disordered; the sequence is AQKTRAEVTGSGKKPWRQKGTGRARAGS.

The protein belongs to the universal ribosomal protein uL4 family. As to quaternary structure, part of the 50S ribosomal subunit.

Its function is as follows. One of the primary rRNA binding proteins, this protein initially binds near the 5'-end of the 23S rRNA. It is important during the early stages of 50S assembly. It makes multiple contacts with different domains of the 23S rRNA in the assembled 50S subunit and ribosome. Functionally, forms part of the polypeptide exit tunnel. The chain is Large ribosomal subunit protein uL4 from Shewanella frigidimarina (strain NCIMB 400).